The primary structure comprises 242 residues: Cysteine desulfuration protein SufE (242 aa).

Catalysis depends on Cys148, which acts as the Cysteine persulfide intermediate.

The protein belongs to the SufE family. As to quaternary structure, monomer. Interacts with SufS; interaction enhances cysteine desulfurase activity of SufS.

The protein resides in the plastid. It is found in the apicoplast. The protein operates within cofactor biosynthesis; iron-sulfur cluster biosynthesis. Functionally, participates in sulfur mobilization (SUF) pathway for iron-sulfur (Fe-S) cluster biogenesis. Enhances cysteine desulfurase activity of SufS. Probably functions as a sulfur acceptor for SufS. The sequence is that of Cysteine desulfuration protein SufE from Plasmodium vivax.